A 502-amino-acid polypeptide reads, in one-letter code: UDP-glucuronosyltransferase 2C1 (502 aa).

2 N-linked (GlcNAc...) asparagine glycosylation sites follow: Asn-177 and Asn-288. A helical transmembrane segment spans residues 466 to 481 (VVVFLLTCVATIIFLA).

This sequence belongs to the UDP-glycosyltransferase family.

It is found in the microsome membrane. The protein localises to the endoplasmic reticulum membrane. The catalysed reaction is glucuronate acceptor + UDP-alpha-D-glucuronate = acceptor beta-D-glucuronoside + UDP + H(+). Its function is as follows. UDPGT is of major importance in the conjugation and subsequent elimination of potentially toxic xenobiotics and endogenous compounds. The polypeptide is UDP-glucuronosyltransferase 2C1 (UGT2C1) (Oryctolagus cuniculus (Rabbit)).